Reading from the N-terminus, the 2315-residue chain is Receptor-type tyrosine-protein phosphatase zeta (2315 aa).

An N-terminal signal peptide occupies residues 1–24; the sequence is MRILKRFLACIQLLCVCRLDWANG. Over 25–1636 the chain is Extracellular; that stretch reads YYRQQRKLVE…LAEGLESEKK (1612 aa). Residues 36-300 enclose the Alpha-carbonic anhydrase domain; that stretch reads IGWSYTGALN…KFSRQVFSSY (265 aa). Cystine bridges form between Cys56-Cys240 and Cys133-Cys264. Residues Asn105, Asn134, Asn223, Asn232, Asn324, and Asn381 are each glycosylated (N-linked (GlcNAc...) asparagine). Residues 314–413 form the Fibronectin type-III domain; it reads EPENVQADPE…LIVDMPTDNP (100 aa). Disordered stretches follow at residues 442–462 and 477–507; these read IVNPGRDSATNQIRKKEPQIS and AKTNRSPTRGSEFSGKGDVPNTSLNSTSQPV. A compositionally biased stretch (polar residues) spans 496–507; that stretch reads PNTSLNSTSQPV. N-linked (GlcNAc...) asparagine glycans are attached at residues Asn497, Asn501, and Asn552. O-linked (Xyl...) (chondroitin sulfate) serine glycosylation is present at Ser587. 2 N-linked (GlcNAc...) asparagine glycosylation sites follow: Asn602 and Asn629. The interval 628–650 is disordered; that stretch reads RNASEDSTSSGSEESLKDPSMEG. The residue at position 637 (Ser637) is a Phosphoserine; alternate. A glycan (O-linked (Xyl...) (chondroitin sulfate) serine; alternate) is linked at Ser637. Ser639 bears the Phosphoserine mark. Asn677 carries an N-linked (GlcNAc...) asparagine glycan. Ser997 is a glycosylation site (O-linked (Xyl...) (chondroitin sulfate) serine). Asn1017, Asn1050, Asn1082, and Asn1122 each carry an N-linked (GlcNAc...) asparagine glycan. Residues 1123–1138 are compositionally biased toward polar residues; that stretch reads FSVQPTHTVSQASGDT. 4 disordered regions span residues 1123 to 1160, 1397 to 1523, 1543 to 1572, and 1584 to 1621; these read FSVQPTHTVSQASGDTSLKPVLSANSEPASSDPASSEM, KATS…EEND, LTSDEESGSGQGTSDSLNENETSTDFSFAD, and AGDSEITPGFPQSPTSSVTSENSEVFHVSEAEASNSSH. Residues 1145 to 1159 show a composition bias toward low complexity; the sequence is SANSEPASSDPASSE. A compositionally biased stretch (acidic residues) spans 1417–1432; sequence EDGDTDDDGDDDDDDR. The span at 1450–1465 shows a compositional bias: basic and acidic residues; that stretch reads ESQEKVMNDSDTHENS. An N-linked (GlcNAc...) asparagine glycan is attached at Asn1457. Polar residues-rich tracts occupy residues 1466-1479 and 1487-1513; these read LMDQNNPISYSLSE and VTSVSSDSQTGMDRSPGKSPSANGLSQ. Residues Ser1549 and Ser1551 are each glycosylated (O-linked (Xyl...) (chondroitin sulfate) serine). Polar residues-rich tracts occupy residues 1554 to 1572 and 1593 to 1606; these read GTSDSLNENETSTDFSFAD and FPQSPTSSVTSENS. Asn1562 carries an N-linked (GlcNAc...) asparagine glycan. Asn1618 carries an N-linked (GlcNAc...) asparagine glycan. Residues 1637-1662 form a helical membrane-spanning segment; sequence AVIPLVIVSALTFICLVVLVGILIYW. Residues 1663 to 2315 lie on the Cytoplasmic side of the membrane; that stretch reads RKCFQTAHFY…NIAESLESLV (653 aa). A phosphothreonine mark is found at Thr1684 and Thr1687. Tyrosine-protein phosphatase domains are found at residues 1717–1992 and 2023–2282; these read FTEE…LVEA and LEKQ…ILSL. Substrate-binding positions include Asp1901, 1933 to 1939, and Gln1977; that span reads CSAGVGR. Cys1933 acts as the Phosphocysteine intermediate in catalysis. Ser2055 carries the post-translational modification Phosphoserine.

It belongs to the protein-tyrosine phosphatase family. Receptor class 5 subfamily. As to quaternary structure, the carbonic-anhydrase like domain interacts with CNTN1 (contactin). Interacts with PTN. Interaction with PTN promotes formation of homooligomers; oligomerization impairs phosphatase activity. Interacts (via chondroitin sulfate chains) with MDK (via C-terminal); this interaction is inhibited by PTN; this interaction promotes neuronal migration. As to expression, specifically expressed in the central nervous system, where it is localized in the Purkinje cell layer of the cerebellum, the dentate gyrus, and the subependymal layer of the anterior horn of the lateral ventricle. Developmentally regulated in the brain.

It localises to the cell membrane. The protein resides in the secreted. It catalyses the reaction O-phospho-L-tyrosyl-[protein] + H2O = L-tyrosyl-[protein] + phosphate. Protein tyrosine phosphatase that negatively regulates oligodendrocyte precursor proliferation in the embryonic spinal cord. Required for normal differentiation of the precursor cells into mature, fully myelinating oligodendrocytes. May play a role in protecting oligondendrocytes against apoptosis. May play a role in the establishment of contextual memory, probably via the dephosphorylation of proteins that are part of important signaling cascades. This Homo sapiens (Human) protein is Receptor-type tyrosine-protein phosphatase zeta (PTPRZ1).